The chain runs to 247 residues: NAD(P)H-quinone oxidoreductase subunit K (247 aa).

[4Fe-4S] cluster is bound by residues cysteine 63, cysteine 64, cysteine 128, and cysteine 159. The disordered stretch occupies residues 218–247 (TRQAPPKELTEAIGMEVPPALASQKQKEEA).

It belongs to the complex I 20 kDa subunit family. NDH-1 can be composed of about 15 different subunits; different subcomplexes with different compositions have been identified which probably have different functions. The cofactor is [4Fe-4S] cluster.

The protein resides in the cellular thylakoid membrane. It carries out the reaction a plastoquinone + NADH + (n+1) H(+)(in) = a plastoquinol + NAD(+) + n H(+)(out). It catalyses the reaction a plastoquinone + NADPH + (n+1) H(+)(in) = a plastoquinol + NADP(+) + n H(+)(out). In terms of biological role, NDH-1 shuttles electrons from an unknown electron donor, via FMN and iron-sulfur (Fe-S) centers, to quinones in the respiratory and/or the photosynthetic chain. The immediate electron acceptor for the enzyme in this species is believed to be plastoquinone. Couples the redox reaction to proton translocation, and thus conserves the redox energy in a proton gradient. Cyanobacterial NDH-1 also plays a role in inorganic carbon-concentration. The chain is NAD(P)H-quinone oxidoreductase subunit K from Crocosphaera subtropica (strain ATCC 51142 / BH68) (Cyanothece sp. (strain ATCC 51142)).